The sequence spans 628 residues: tRNA uridine 5-carboxymethylaminomethyl modification enzyme MnmG 1 (628 aa).

Glycine 11 to glycine 16 is a binding site for FAD. Glycine 280–phenylalanine 294 serves as a coordination point for NAD(+).

It belongs to the MnmG family. As to quaternary structure, homodimer. Heterotetramer of two MnmE and two MnmG subunits. The cofactor is FAD.

It is found in the cytoplasm. Its function is as follows. NAD-binding protein involved in the addition of a carboxymethylaminomethyl (cmnm) group at the wobble position (U34) of certain tRNAs, forming tRNA-cmnm(5)s(2)U34. This Fusobacterium nucleatum subsp. nucleatum (strain ATCC 25586 / DSM 15643 / BCRC 10681 / CIP 101130 / JCM 8532 / KCTC 2640 / LMG 13131 / VPI 4355) protein is tRNA uridine 5-carboxymethylaminomethyl modification enzyme MnmG 1.